Here is a 452-residue protein sequence, read N- to C-terminus: MYRQLVNILTALFAFFLGTNHFREAFCKDHDSRSGKHPSQTLSPSDFLDKLMGRTSGYDARIRPNFKGPPVNVTCNIFINSFGSVTETTMDYRVNIFLRQQWNDSRLAYSEYPDDSLDLDPSMLDSIWKPDLFFANEKGANFHDVTTDNKLLRISKNGKVLYSIRLTLTLSCPMDLKNFPMDVQTCTMQLESFGYTMNDLIFEWLSDGPVQVAEGLTLPQFILKEEKELGYCTKHYNTGKFTCIEVKFHLERQMGYYLIQMYIPSLLIVILSWVSFWINMDAAPARVALGITTVLTMTTQSSGSRASLPKVSYVKAIDIWMAVCLLFVFAALLEYAAVNFVSRQHKEFLRLRRRQKRQNKEEDVTRESRFNFSGYGMGHCLQMKDGTAVKATPANPLPQPPKDADAIKKKFVDRAKRIDTISRAAFPLAFLIFNIFYWITYKIIRHEDVHKK.

Residues Met-1–Cys-27 form the signal peptide. Residues Lys-28–Tyr-256 are Extracellular-facing. N-linked (GlcNAc...) asparagine glycosylation is present at Asn-72. Glycine is bound at residue Arg-99. Arg-99 contributes to the strychnine binding site. N-linked (GlcNAc...) asparagine glycosylation occurs at Asn-103. Glycine is bound at residue Ser-163. A disulfide bridge links Cys-172 with Cys-186. Zn(2+)-binding residues include Glu-226 and Glu-228. Cys-232 and Cys-243 are joined by a disulfide. Glycine is bound at residue Thr-238. Position 249 (His-249) interacts with Zn(2+). The chain crosses the membrane as a helical span at residues Tyr-257–Ile-278. Residues Asn-279–Ala-283 are Cytoplasmic-facing. The chain crosses the membrane as a helical span at residues Pro-284–Ser-304. The Extracellular segment spans residues Arg-305–Lys-315. The chain crosses the membrane as a helical span at residues Ala-316–Ala-336. The Cytoplasmic segment spans residues Ala-337–Thr-420. The chain crosses the membrane as a helical span at residues Ile-421–Tyr-441. Topologically, residues Lys-442 to Lys-452 are extracellular.

It belongs to the ligand-gated ion channel (TC 1.A.9) family. Glycine receptor (TC 1.A.9.3) subfamily. GLRA2 sub-subfamily. Interacts with GLRB. Heteropentamer composed of GLRA2 and GLRB; functional GLRB-GLRA2 heteropentamers contain four GLRA2 subunits and one GLRB subunit, although alternative subunit composition cannot be excluded. Homopentamer (in vitro). Both homopentamers and heteropentamers form functional ion channels, but their characteristics are subtly different. Detected in the retina inner plexiform layer (at protein level). Detected in neonate retina. Detected in brain. Detected in spinal cord, with higher levels in the dorsal horn.

The protein localises to the postsynaptic cell membrane. It is found in the synapse. The protein resides in the cell membrane. It localises to the cell projection. It catalyses the reaction chloride(in) = chloride(out). Channel opening is triggered by extracellular glycine. Channel opening is also triggered by taurine and beta-alanine. Inhibited by strychnine. Inhibited by picrotoxin. Functionally, subunit of heteromeric glycine-gated chloride channels. Plays a role in synaptic plasticity. Contributes to the generation of inhibitory postsynaptic currents, and is involved in the down-regulation of neuronal excitability. Plays a role in cellular responses to ethanol. The protein is Glycine receptor subunit alpha-2 of Mus musculus (Mouse).